Reading from the N-terminus, the 247-residue chain is Ribose-5-phosphate isomerase (247 aa).

Belongs to the ribose 5-phosphate isomerase family.

Its subcellular location is the cytoplasm. It catalyses the reaction aldehydo-D-ribose 5-phosphate = D-ribulose 5-phosphate. The protein operates within carbohydrate degradation; pentose phosphate pathway; D-ribose 5-phosphate from D-ribulose 5-phosphate (non-oxidative stage): step 1/1. This Meyerozyma guilliermondii (strain ATCC 6260 / CBS 566 / DSM 6381 / JCM 1539 / NBRC 10279 / NRRL Y-324) (Yeast) protein is Ribose-5-phosphate isomerase (RKI1).